Reading from the N-terminus, the 791-residue chain is Phosphoenolpyruvate synthase (791 aa).

T416 is subject to Phosphothreonine. The active-site Tele-phosphohistidine intermediate is the H418. Positions 508, 575, 677, 698, 699, 700, and 701 each coordinate substrate. E677 contributes to the Mg(2+) binding site. Position 701 (D701) interacts with Mg(2+). Position 744 is a phosphotyrosine (Y744). The Proton donor role is filled by C748.

This sequence belongs to the PEP-utilizing enzyme family. Requires Mg(2+) as cofactor.

It carries out the reaction pyruvate + ATP + H2O = phosphoenolpyruvate + AMP + phosphate + 2 H(+). It functions in the pathway carbohydrate biosynthesis; gluconeogenesis. Functionally, catalyzes the phosphorylation of pyruvate to phosphoenolpyruvate. The polypeptide is Phosphoenolpyruvate synthase (ppsA) (Pseudomonas aeruginosa (strain UCBPP-PA14)).